The following is a 366-amino-acid chain: Transcription factor bHLH74 (366 aa).

Residues 1-11 (MGGESNEGGEM) are compositionally biased toward gly residues. Disordered regions lie at residues 1 to 20 (MGGE…DDES) and 123 to 201 (GESS…APKE). 2 stretches are compositionally biased toward basic and acidic residues: residues 123–134 (GESSHEDHHQVS) and 159–170 (KAVEEFQEDPQR). The 51-residue stretch at 212–262 (QATNSHSLAERVRREKISERMRLLQELVPGCNKITGKAVMLDEIINYVQSL) folds into the bHLH domain.

As to quaternary structure, homodimer. Interacts with IBH1. Binds reversibly to CRY2 after blue light illumination. As to expression, expressed constitutively in roots, leaves, stems, and flowers.

It localises to the nucleus. Transcriptional activator involved in cell elongation. Regulates the expression of a subset of genes involved in cell expansion by binding to the G-box motif. Binds to chromatin DNA of the FT gene and promotes its expression, and thus triggers flowering in response to blue light. In Arabidopsis thaliana (Mouse-ear cress), this protein is Transcription factor bHLH74 (BHLH74).